A 948-amino-acid polypeptide reads, in one-letter code: ELKS/Rab6-interacting/CAST family member 1 (948 aa).

A disordered region spans residues 1–54 (MYGSARSVGKVEPSSQSPGRSPRLPRSPRLGHRRTNSTGGSSGNSVGGGSGKTL). Residue Lys-10 is modified to N6-acetyllysine. The span at 13 to 28 (PSSQSPGRSPRLPRSP) shows a compositional bias: low complexity. A phosphoserine mark is found at Ser-17, Ser-21, and Ser-37. Thr-38 is subject to Phosphothreonine. Positions 40–51 (GSSGNSVGGGSG) are enriched in gly residues. A phosphoserine mark is found at Ser-55, Ser-75, Ser-94, Ser-796, and Ser-937. The stretch at 144–920 (RQARDNTIMD…RMKLMADNYE (777 aa)) forms a coiled coil. A compositionally biased stretch (basic and acidic residues) spans 773–796 (KHKEQVEKKKSAQMLEEARRREDS). Disordered regions lie at residues 773 to 801 (KHKE…SDSS) and 903 to 948 (QLKQ…GIWA). A compositionally biased stretch (acidic residues) spans 939–948 (DQDEEEGIWA).

In terms of assembly, interacts with the GTB-bound forms of RAB6A isoform 1 and isoform 2 and with RAB6B. The interaction was strongest with RAB6B, followed by RAB6A isoform 2 and weakest with RAB6A isoform 1. Part of a complex with CHUK, IKBKB and IKBKG. Interacts with CHUK, IKBKB and IKBKG. The interaction with IKBKG is independent of CHUK and IKBKB. Interacts with NFKBIA. Isoform 1 interacts through its C-terminus with the PDZ domains of RIMS1 and RIMS2. Interacts with ERC2/CAST1. Interacts with SDCCAG8. Part of a cortical microtubule stabilization complex (CMSC) composed of KANK1, PPFIA1, PPFIBP1, ERC1/ELKS, PHLDB2/LL5beta, CLASPs, KIF21A and possibly additional interactors; within CMSCs KANK1 and PHLDB2/LL5beta appear to be the core components for targeting of microtubule-binding proteins KIF21A and CLASPs, whereas PPFIA1, PPFIBP1 and ERC1/ELKS serve as scaffolds for protein clustering. In terms of tissue distribution, isoform 1 is specifically expressed in brain. A further probable isoform is widely expressed outside of brain It is referred to as ERC1a by PubMed:12391317 and characterized by a C-terminus identical to that of isoforms 1 in human and mouse.

The protein resides in the cytoplasm. It is found in the cytoskeleton. Its subcellular location is the microtubule organizing center. The protein localises to the centrosome. It localises to the membrane. The protein resides in the golgi apparatus membrane. It is found in the presynaptic active zone. Its subcellular location is the cell projection. The protein localises to the podosome. In terms of biological role, regulatory subunit of the IKK complex. Probably recruits IkappaBalpha/NFKBIA to the complex. May be involved in the organization of the cytomatrix at the nerve terminals active zone (CAZ) which regulates neurotransmitter release. May be involved in vesicle trafficking at the CAZ. May be involved in Rab-6 regulated endosomes to Golgi transport. The sequence is that of ELKS/Rab6-interacting/CAST family member 1 (Erc1) from Rattus norvegicus (Rat).